The primary structure comprises 287 residues: Probable endonuclease 4 (287 aa).

Residues H69, H109, E144, D178, H181, H215, D228, H230, and E260 each coordinate Zn(2+).

It belongs to the AP endonuclease 2 family. The cofactor is Zn(2+).

The enzyme catalyses Endonucleolytic cleavage to 5'-phosphooligonucleotide end-products.. Endonuclease IV plays a role in DNA repair. It cleaves phosphodiester bonds at apurinic or apyrimidinic (AP) sites, generating a 3'-hydroxyl group and a 5'-terminal sugar phosphate. This is Probable endonuclease 4 from Thermotoga neapolitana (strain ATCC 49049 / DSM 4359 / NBRC 107923 / NS-E).